The chain runs to 456 residues: Bifunctional protein GlmU (456 aa).

Positions 1 to 229 are pyrophosphorylase; the sequence is MLNNAMSVVI…LSEVEGVNNR (229 aa). Residues 11–14, Lys-25, Gln-76, 81–82, 103–105, Gly-140, Glu-154, Asn-169, and Asn-227 each bind UDP-N-acetyl-alpha-D-glucosamine; these read LAAG, GT, and YGD. Asp-105 is a Mg(2+) binding site. Position 227 (Asn-227) interacts with Mg(2+). Residues 230–250 form a linker region; the sequence is LQLSRLERVYQSEQAEKLLLA. The segment at 251 to 456 is N-acetyltransferase; the sequence is GVMLRDPARF…EGWRRPVKKK (206 aa). Positions 333 and 351 each coordinate UDP-N-acetyl-alpha-D-glucosamine. The Proton acceptor role is filled by His-363. UDP-N-acetyl-alpha-D-glucosamine contacts are provided by Tyr-366 and Asn-377. Acetyl-CoA contacts are provided by residues Ala-380, 386–387, Ser-405, Ala-423, and Arg-440; that span reads NY.

It in the N-terminal section; belongs to the N-acetylglucosamine-1-phosphate uridyltransferase family. In the C-terminal section; belongs to the transferase hexapeptide repeat family. Homotrimer. The cofactor is Mg(2+).

It localises to the cytoplasm. The enzyme catalyses alpha-D-glucosamine 1-phosphate + acetyl-CoA = N-acetyl-alpha-D-glucosamine 1-phosphate + CoA + H(+). It catalyses the reaction N-acetyl-alpha-D-glucosamine 1-phosphate + UTP + H(+) = UDP-N-acetyl-alpha-D-glucosamine + diphosphate. Its pathway is nucleotide-sugar biosynthesis; UDP-N-acetyl-alpha-D-glucosamine biosynthesis; N-acetyl-alpha-D-glucosamine 1-phosphate from alpha-D-glucosamine 6-phosphate (route II): step 2/2. The protein operates within nucleotide-sugar biosynthesis; UDP-N-acetyl-alpha-D-glucosamine biosynthesis; UDP-N-acetyl-alpha-D-glucosamine from N-acetyl-alpha-D-glucosamine 1-phosphate: step 1/1. It participates in bacterial outer membrane biogenesis; LPS lipid A biosynthesis. Its function is as follows. Catalyzes the last two sequential reactions in the de novo biosynthetic pathway for UDP-N-acetylglucosamine (UDP-GlcNAc). The C-terminal domain catalyzes the transfer of acetyl group from acetyl coenzyme A to glucosamine-1-phosphate (GlcN-1-P) to produce N-acetylglucosamine-1-phosphate (GlcNAc-1-P), which is converted into UDP-GlcNAc by the transfer of uridine 5-monophosphate (from uridine 5-triphosphate), a reaction catalyzed by the N-terminal domain. In Shigella sonnei (strain Ss046), this protein is Bifunctional protein GlmU.